Reading from the N-terminus, the 117-residue chain is Eukaryotic translation initiation factor 4E-binding protein 1 (117 aa).

Composition is skewed to polar residues over residues 1–12 (MSAGSSCSQTPS) and 33–47 (YSTT…TTPG). The segment at 1–47 (MSAGSSCSQTPSRAIPTRRVALGDGVQLPPGDYSTTPGGTLFSTTPG) is disordered. An N-acetylserine modification is found at S2. Phosphothreonine is present on residues T36 and T40. S43 is modified (phosphoserine). 2 positions are modified to phosphothreonine: T45 and T49. Y53 carries the phosphotyrosine modification. Residues 53-59 (YDRKFLM) carry the YXXXXLphi motif motif. K56 is covalently cross-linked (Glycyl lysine isopeptide (Lys-Gly) (interchain with G-Cter in ubiquitin)). A Phosphoserine modification is found at S64. Residues 64-117 (SPVAKTPPKDLPAIPGVTSPTSDEPPMQASQSQLPSSPEDKRAGGEESQFEMDI) form a disordered region. T69 is subject to Phosphothreonine. Residues 81-99 (TSPTSDEPPMQASQSQLPS) are compositionally biased toward polar residues. S82, S95, S99, S100, and S111 each carry phosphoserine. A TOS motif motif is present at residues 113 to 117 (FEMDI).

This sequence belongs to the eIF4E-binding protein family. As to quaternary structure, hypophosphorylated EIF4EBP1 competes with EIF4G1/EIF4G3 to interact with EIF4E; insulin stimulated MAP-kinase (MAPK1 and MAPK3) or mTORC1 phosphorylation of EIF4EBP1 causes dissociation of the complex allowing EIF4G1/EIF4G3 to bind and consequent initiation of translation. Interacts (via TOS motif) with RPTOR; promoting phosphorylation by mTORC1. In terms of processing, phosphorylated on serine and threonine residues in response to insulin, EGF and PDGF. Phosphorylation at Thr-36, Thr-45, Ser-64 and Thr-69, corresponding to the hyperphosphorylated form, is regulated by mTORC1 and abolishes binding to EIF4E. Ubiquitinated: when eIF4E levels are low, hypophosphorylated form is ubiquitinated by the BCR(KLHL25) complex, leading to its degradation and serving as a homeostatic mechanism to maintain translation and prevent eIF4E inhibition when eIF4E levels are low. Not ubiquitinated when hyperphosphorylated (at Thr-36, Thr-45, Ser-64 and Thr-69) or associated with eIF4E. Highest expression in fat cells.

Its subcellular location is the cytoplasm. The protein localises to the nucleus. Functionally, repressor of translation initiation that regulates EIF4E activity by preventing its assembly into the eIF4F complex: hypophosphorylated form competes with EIF4G1/EIF4G3 and strongly binds to EIF4E, leading to repress translation. In contrast, hyperphosphorylated form dissociates from EIF4E, allowing interaction between EIF4G1/EIF4G3 and EIF4E, leading to initiation of translation. Mediates the regulation of protein translation by hormones, growth factors and other stimuli that signal through the MAP kinase and mTORC1 pathways. The protein is Eukaryotic translation initiation factor 4E-binding protein 1 (Eif4ebp1) of Mus musculus (Mouse).